A 498-amino-acid polypeptide reads, in one-letter code: Glycerol kinase (498 aa).

Residue Thr-11 participates in ADP binding. Thr-11, Ser-12, and Ser-13 together coordinate ATP. Residue Thr-11 participates in sn-glycerol 3-phosphate binding. Arg-15 contacts ADP. Residues Arg-81, Glu-82, Tyr-133, and Asp-242 each coordinate sn-glycerol 3-phosphate. Glycerol is bound by residues Arg-81, Glu-82, Tyr-133, Asp-242, and Gln-243. ADP-binding residues include Thr-264 and Gly-307. Thr-264, Gly-307, Gln-311, and Gly-412 together coordinate ATP. ADP is bound by residues Gly-412 and Asn-416.

Belongs to the FGGY kinase family.

The catalysed reaction is glycerol + ATP = sn-glycerol 3-phosphate + ADP + H(+). Its pathway is polyol metabolism; glycerol degradation via glycerol kinase pathway; sn-glycerol 3-phosphate from glycerol: step 1/1. Its activity is regulated as follows. Inhibited by fructose 1,6-bisphosphate (FBP). Its function is as follows. Key enzyme in the regulation of glycerol uptake and metabolism. Catalyzes the phosphorylation of glycerol to yield sn-glycerol 3-phosphate. The sequence is that of Glycerol kinase from Acidovorax ebreus (strain TPSY) (Diaphorobacter sp. (strain TPSY)).